The primary structure comprises 348 residues: Histidinol-phosphate aminotransferase (348 aa).

An N6-(pyridoxal phosphate)lysine modification is found at K207.

It belongs to the class-II pyridoxal-phosphate-dependent aminotransferase family. Histidinol-phosphate aminotransferase subfamily. In terms of assembly, homodimer. Pyridoxal 5'-phosphate is required as a cofactor.

The catalysed reaction is L-histidinol phosphate + 2-oxoglutarate = 3-(imidazol-4-yl)-2-oxopropyl phosphate + L-glutamate. It functions in the pathway amino-acid biosynthesis; L-histidine biosynthesis; L-histidine from 5-phospho-alpha-D-ribose 1-diphosphate: step 7/9. The sequence is that of Histidinol-phosphate aminotransferase from Crocosphaera subtropica (strain ATCC 51142 / BH68) (Cyanothece sp. (strain ATCC 51142)).